The sequence spans 291 residues: Small ribosomal subunit protein uS2 (291 aa).

The tract at residues 256 to 291 (STTAPPNWEATGGDWATSTAPAEGWAGDAPAGETKW) is disordered.

The protein belongs to the universal ribosomal protein uS2 family. Component of the small ribosomal subunit. Mature ribosomes consist of a small (40S) and a large (60S) subunit. The 40S subunit contains about 33 different proteins and 1 molecule of RNA (18S). The 60S subunit contains about 49 different proteins and 3 molecules of RNA (25S, 5.8S and 5S). Interacts with RPS21.

It is found in the cytoplasm. Functionally, required for the assembly and/or stability of the 40S ribosomal subunit. Required for the processing of the 20S rRNA-precursor to mature 18S rRNA in a late step of the maturation of 40S ribosomal subunits. The chain is Small ribosomal subunit protein uS2 from Coccidioides immitis (strain RS) (Valley fever fungus).